The sequence spans 98 residues: Elicitin Vex1 (98 aa).

3 cysteine pairs are disulfide-bonded: C3/C71, C27/C56, and C51/C95. N-linked (GlcNAc...) asparagine glycosylation occurs at N92.

It belongs to the elicitin family.

The protein localises to the secreted. Functionally, induces local and distal defense responses (incompatible hypersensitive reaction) in plants from the solanaceae and cruciferae families. Elicits leaf necrosis and causes the accumulation of pathogenesis-related proteins. Might interact with the lipidic molecules of the plasma membrane. This chain is Elicitin Vex1, found in Phytopythium vexans (Damping-off fungus).